The sequence spans 190 residues: Dynactin subunit 6 (190 aa).

Thr186 carries the post-translational modification Phosphothreonine; by CDK1.

This sequence belongs to the dynactin subunits 5/6 family. Dynactin subunit 6 subfamily. As to quaternary structure, subunit of dynactin, a multiprotein complex part of a tripartite complex with dynein and a adapter, such as BICDL1, BICD2 or HOOK3. The dynactin complex is built around ACTR1A/ACTB filament and consists of an actin-related filament composed of a shoulder domain, a pointed end and a barbed end. Its length is defined by its flexible shoulder domain. The soulder is composed of 2 DCTN1 subunits, 4 DCTN2 and 2 DCTN3. The 4 DCNT2 (via N-terminus) bind the ACTR1A filament and act as molecular rulers to determine the length. The pointed end is important for binding dynein-dynactin cargo adapters. Consists of 4 subunits: ACTR10, DCNT4, DCTN5 and DCTN6. Within the complex DCTN6 forms a heterodimer with DCTN5. The barbed end is composed of a CAPZA1:CAPZB heterodimers, which binds ACTR1A/ACTB filament and dynactin and stabilizes dynactin. Interacts with PLK1. Interacts with N4BP2L1. Phosphorylation at Thr-186 by CDK1 during mitotic prometaphase creates a binding site for PLK1 that facilitates its recruitment to kinetochores.

The protein localises to the cytoplasm. Its subcellular location is the cytoskeleton. It localises to the chromosome. The protein resides in the centromere. It is found in the kinetochore. Its function is as follows. Part of the dynactin complex that activates the molecular motor dynein for ultra-processive transport along microtubules. The protein is Dynactin subunit 6 (DCTN6) of Bos taurus (Bovine).